The primary structure comprises 196 residues: Holliday junction branch migration complex subunit RuvA (196 aa).

Residues 1–63 (MYDYIKGTLV…DDAHLLFGFH (63 aa)) are domain I. Residues 64–142 (TEDEKEVFLK…ELPAETTNTT (79 aa)) form a domain II region. The interval 143-146 (ANQT) is flexible linker. The interval 147-196 (AGNQQLDEAMEALLALGYKSTELKKVKAFFEDTNETAEQYIKSALKMLMK) is domain III.

It belongs to the RuvA family. Homotetramer. Forms an RuvA(8)-RuvB(12)-Holliday junction (HJ) complex. HJ DNA is sandwiched between 2 RuvA tetramers; dsDNA enters through RuvA and exits via RuvB. An RuvB hexamer assembles on each DNA strand where it exits the tetramer. Each RuvB hexamer is contacted by two RuvA subunits (via domain III) on 2 adjacent RuvB subunits; this complex drives branch migration. In the full resolvosome a probable DNA-RuvA(4)-RuvB(12)-RuvC(2) complex forms which resolves the HJ.

It is found in the cytoplasm. Functionally, the RuvA-RuvB-RuvC complex processes Holliday junction (HJ) DNA during genetic recombination and DNA repair, while the RuvA-RuvB complex plays an important role in the rescue of blocked DNA replication forks via replication fork reversal (RFR). RuvA specifically binds to HJ cruciform DNA, conferring on it an open structure. The RuvB hexamer acts as an ATP-dependent pump, pulling dsDNA into and through the RuvAB complex. HJ branch migration allows RuvC to scan DNA until it finds its consensus sequence, where it cleaves and resolves the cruciform DNA. This is Holliday junction branch migration complex subunit RuvA from Streptococcus thermophilus (strain CNRZ 1066).